The primary structure comprises 260 residues: Putative ABC transporter substrate-binding lipoprotein YvgL (260 aa).

The N-terminal stretch at 1–20 (MFKKYSIFIAALTAFLLVAG) is a signal peptide. The N-palmitoyl cysteine moiety is linked to residue Cys-21. A lipid anchor (S-diacylglycerol cysteine) is attached at Cys-21. Molybdate contacts are provided by Ser-43, Ser-71, Ala-151, Val-178, and Tyr-196.

The protein belongs to the bacterial solute-binding protein ModA family.

It localises to the cell membrane. In Bacillus subtilis (strain 168), this protein is Putative ABC transporter substrate-binding lipoprotein YvgL (yvgL).